A 632-amino-acid chain; its full sequence is RNA-binding post-transcriptional regulator csx1 (632 aa).

Residues serine 42 and serine 54 each carry the phosphoserine; by MAPK sty1 modification. Residues serine 67 and serine 69 each carry the phosphoserine modification. RRM domains lie at 85 to 167 (DTLW…WATG) and 182 to 261 (FSIF…VASP). Serine 291 bears the Phosphoserine; by MAPK sty1 mark. One can recognise an RRM 3 domain in the interval 297-369 (TTVFVGGLAS…SHIRLAWGHN (73 aa)). Serine 455 carries the post-translational modification Phosphoserine; by MAPK sty1. The segment at 456–476 (PPPLSRSASISPTLSGSGSGL) is disordered. The segment covering 466 to 476 (SPTLSGSGSGL) has biased composition (low complexity).

As to quaternary structure, interacts with cip1 and cip2.

It is found in the cytoplasm. In terms of biological role, regulates global gene expression after oxidative stress. Interacts and stabilizes atf1 and pcr1 mRNAs after oxidative stress, thus controlling their turnover. The protein is RNA-binding post-transcriptional regulator csx1 (csx1) of Schizosaccharomyces pombe (strain 972 / ATCC 24843) (Fission yeast).